A 554-amino-acid polypeptide reads, in one-letter code: Phosphomethylpyrimidine synthase (554 aa).

Residues N188, M217, Y246, H282, 302 to 304, 343 to 346, and E382 contribute to the substrate site; these read SRG and DGLR. Residue H386 coordinates Zn(2+). Y409 is a substrate binding site. H450 contacts Zn(2+). [4Fe-4S] cluster-binding residues include C530, C533, and C538.

The protein belongs to the ThiC family. Homodimer. [4Fe-4S] cluster serves as cofactor.

The enzyme catalyses 5-amino-1-(5-phospho-beta-D-ribosyl)imidazole + S-adenosyl-L-methionine = 4-amino-2-methyl-5-(phosphooxymethyl)pyrimidine + CO + 5'-deoxyadenosine + formate + L-methionine + 3 H(+). The protein operates within cofactor biosynthesis; thiamine diphosphate biosynthesis. In terms of biological role, catalyzes the synthesis of the hydroxymethylpyrimidine phosphate (HMP-P) moiety of thiamine from aminoimidazole ribotide (AIR) in a radical S-adenosyl-L-methionine (SAM)-dependent reaction. This chain is Phosphomethylpyrimidine synthase, found in Coxiella burnetii (strain Dugway 5J108-111).